We begin with the raw amino-acid sequence, 360 residues long: Phospho-N-acetylmuramoyl-pentapeptide-transferase (360 aa).

The next 10 helical transmembrane spans lie at 27-47, 70-90, 98-118, 134-154, 168-188, 199-219, 239-259, 263-283, 288-308, and 337-357; these read GALFTAGFFVFWFGPWIISLL, GTPTMGGLMILAGAVVSILLW, VWVTLAVTLGFGAIGFYDDYL, LLLEFAIAGAACLMISLYSPA, TLLNLGWFWVPFAAFVIVGAG, GLAIVPVMIACATFGIIAYLV, LAVVCGAVIGAGLGFLWFNAP, IFMGDTGSLALGGLLGSIAVA, IVLAIVGGLFVLEIMSVIIQV, and QVVIRFWIIAVILALVGLATL.

This sequence belongs to the glycosyltransferase 4 family. MraY subfamily. Mg(2+) is required as a cofactor.

Its subcellular location is the cell inner membrane. It catalyses the reaction UDP-N-acetyl-alpha-D-muramoyl-L-alanyl-gamma-D-glutamyl-meso-2,6-diaminopimeloyl-D-alanyl-D-alanine + di-trans,octa-cis-undecaprenyl phosphate = di-trans,octa-cis-undecaprenyl diphospho-N-acetyl-alpha-D-muramoyl-L-alanyl-D-glutamyl-meso-2,6-diaminopimeloyl-D-alanyl-D-alanine + UMP. It functions in the pathway cell wall biogenesis; peptidoglycan biosynthesis. Functionally, catalyzes the initial step of the lipid cycle reactions in the biosynthesis of the cell wall peptidoglycan: transfers peptidoglycan precursor phospho-MurNAc-pentapeptide from UDP-MurNAc-pentapeptide onto the lipid carrier undecaprenyl phosphate, yielding undecaprenyl-pyrophosphoryl-MurNAc-pentapeptide, known as lipid I. The protein is Phospho-N-acetylmuramoyl-pentapeptide-transferase of Methylorubrum extorquens (strain CM4 / NCIMB 13688) (Methylobacterium extorquens).